The chain runs to 363 residues: Ferredoxin--NADP reductase, cyanelle (363 aa).

The transit peptide at 1 to 65 (MAFVASVPVF…TFEVDTTIRA (65 aa)) directs the protein to the cyanelle. Residues 84–206 (ANPYIGKCIY…TGPVGTTMLM (123 aa)) form the FAD-binding FR-type domain. FAD-binding positions include 142–145 (RLYS), 163–165 (SVK), Tyr-169, 180–182 (VCS), and Thr-221. Positions 145 and 165 each coordinate NADP(+). Residues Thr-221, 253-254 (VP), 283-284 (SR), Lys-293, 322-323 (GL), and Glu-361 contribute to the NADP(+) site.

The protein belongs to the ferredoxin--NADP reductase type 1 family. The cofactor is FAD.

It is found in the plastid. The protein localises to the cyanelle stroma. It localises to the cyanelle thylakoid membrane. The catalysed reaction is 2 reduced [2Fe-2S]-[ferredoxin] + NADP(+) + H(+) = 2 oxidized [2Fe-2S]-[ferredoxin] + NADPH. Functionally, may play a key role in regulating the relative amounts of cyclic and non-cyclic electron flow to meet the demands of the plant for ATP and reducing power. This is Ferredoxin--NADP reductase, cyanelle (PETH) from Cyanophora paradoxa.